A 584-amino-acid chain; its full sequence is Arginine--tRNA ligase (584 aa).

Positions Pro-127–His-137 match the 'HIGH' region motif.

The protein belongs to the class-I aminoacyl-tRNA synthetase family. Monomer.

It localises to the cytoplasm. The enzyme catalyses tRNA(Arg) + L-arginine + ATP = L-arginyl-tRNA(Arg) + AMP + diphosphate. The sequence is that of Arginine--tRNA ligase from Borrelia hermsii (strain HS1 / DAH).